A 187-amino-acid polypeptide reads, in one-letter code: Ribosome-recycling factor (187 aa).

This sequence belongs to the RRF family.

The protein localises to the cytoplasm. Its function is as follows. Responsible for the release of ribosomes from messenger RNA at the termination of protein biosynthesis. May increase the efficiency of translation by recycling ribosomes from one round of translation to another. The sequence is that of Ribosome-recycling factor from Anaeromyxobacter sp. (strain Fw109-5).